Consider the following 37-residue polypeptide: Conotoxin r11e (37 aa).

Intrachain disulfides connect Cys2–Cys16, Cys9–Cys21, Cys15–Cys26, and Cys20–Cys33. 4-carboxyglutamate occurs at positions 13 and 14. The residue at position 34 (Trp34) is a 6'-bromotryptophan.

In terms of tissue distribution, expressed by the venom duct.

The protein localises to the secreted. In terms of biological role, causes hyperactivity, circular motion, convulsion, urination and death, when injected into 13- to 15-day-old mice. Causes gasping, backward swimming or swimming in a vertical direction and death, when intraperitoneally injected into goldfish. This chain is Conotoxin r11e, found in Conus radiatus (Rayed cone).